The chain runs to 282 residues: Putative hydrolase Bcep18194_B0137 (282 aa).

Glu-124, Glu-126, and Asp-155 together coordinate Mg(2+).

The protein belongs to the FAH family. The cofactor is Mg(2+).

In Burkholderia lata (strain ATCC 17760 / DSM 23089 / LMG 22485 / NCIMB 9086 / R18194 / 383), this protein is Putative hydrolase Bcep18194_B0137.